A 519-amino-acid polypeptide reads, in one-letter code: Cell adhesion molecule CEACAM1 (519 aa).

The first 34 residues, 1–34, serve as a signal peptide directing secretion; the sequence is MELASARLLRGQIPWRGLLLTASLLTYWSPLTTA. Q35 carries the post-translational modification Pyrrolidone carboxylic acid. Residues 35–425 lie on the Extracellular side of the membrane; it reads QVTVDAVPPN…QGNSGLSEGA (391 aa). The segment at 39 to 142 is required for homophilic binding; that stretch reads DAVPPNVVEE…QTSVQFRVYP (104 aa). The region spanning 42–140 is the Ig-like V-type domain; that stretch reads PPNVVEEKSV…PIQTSVQFRV (99 aa). 14 N-linked (GlcNAc...) asparagine glycosylation sites follow: N87, N104, N113, N148, N152, N173, N197, N224, N256, N288, N292, N302, N315, and N331. 3 consecutive Ig-like C2-type domains span residues 147-232, 237-317, and 325-403; these read PNVT…FNLD, PDAP…KNIT, and PSIQ…FRIS. C167 and C215 are oxidised to a cystine. An intrachain disulfide couples C259 to C299. C344 and C392 form a disulfide bridge. N374 carries N-linked (GlcNAc...) asparagine; atypical glycosylation. A helical transmembrane segment spans residues 426–446; the sequence is IAGIVIGSVAGVALIAALAYF. The segment at 445 to 457 is interaction with calmodulin; that stretch reads YFLYSRKTGGGSD. Over 447–519 the chain is Cytoplasmic; sequence LYSRKTGGGS…ETVYSVVKKK (73 aa). Residues 447–519 are interaction with FLNA; sequence LYSRKTGGGS…ETVYSVVKKK (73 aa). The tract at residues 455–519 is disordered; sequence GSDHRDLTEH…ETVYSVVKKK (65 aa). Residues 456-466 show a composition bias toward basic and acidic residues; it reads SDHRDLTEHKP. Positions 484-519 are required for interaction with PTPN11 and PTPN6 and for control of phosphorylation level; that stretch reads DDVSYSVLNFNAQQSKRPTSASSSPTETVYSVVKKK. Y488 carries the phosphotyrosine; by SRC, LCK, INSR and EGFR modification. Over residues 489 to 512 the composition is skewed to polar residues; that stretch reads SVLNFNAQQSKRPTSASSSPTETV. The residue at position 503 (S503) is a Phosphoserine. Position 513 is a phosphotyrosine; by INSR, SRC and LCK (Y513). Residues 513–516 are essential for interaction with PTPN11 and PTPN6; that stretch reads YSVV.

The protein belongs to the immunoglobulin superfamily. CEA family. In terms of assembly, monomer. Oligomer. Heterodimer. Homodimer. Cis-dimer/oligomer (via Ig-like C2-type and/or via cytoplasmic domains); induced by trans-homophilic cell adhesion through an allosteric mechanism transmitted by the Ig-like V-type domain, and is regulated by intracellular calcium and calmodulin. Interacts (via cytoplasmic domain) with calmodulin in a calcium dependent manner; reduces homophilic cell adhesion through dissociation of dimer. Isoform 1 interacts (via cytoplasmic domain) with PTPN11 (preferentially) and PTPN6; cis-homodimer form is preferred; this interaction is decreased by formation of isoform 1 / isoform 2 cis-heterodimers and is dependent on the monomer/dimer equilibrium; this interaction is phosphorylation-dependent. Isoform 1 interacts with LYN. Isoform 1 interacts (via cytoplasmic domain) with SRC (via SH2 domain); this interaction is regulated by trans-homophilic cell adhesion. Isoform 1 interacts (via cytoplasmic domain) with LCK; mediates phosphorylation at Tyr-488 and Tyr-513 resulting in PTPN6 association. Isoform 1 interacts with PTPN6; this interaction is phosphorylation-dependent and causes a profound decrease in TCR stimulation-induced CD247 and ZAP70 phosphorylation. Isoform 1 interacts with TCR/CD3 complex through TCR beta chain and CD3E; colocalizes at the cell surface and upon stimulation of the TCR/CD3 complex recruits PTPN6 in the TCR/CD3 complex, resulting in dephosphorylation of CD247 and ZAP70. Isoform 1 interacts (via cytoplasmic domain) with SHC1 (via SH2 domain); SHC1 mediates interaction with INSR or EGFR in a Ser-503 phosphorylation-dependent manner. Isoform 1 interacts with EGFR; the interaction is indirect. Isoform 1 interacts with CSF3R; down-regulates the CSF3R-STAT3 pathway through recruitment of PTPN6 that dephosphorylates CSF3R. Isoform 1 (phosphorylated form) interacts with TLR4 and SYK; recruits PTPN6 that dephosphorylates SYK, reducing the production of reactive oxygen species (ROS) and lysosome disruption, leading to a reduction of the inflammasome activity. Isoform 1 interacts with FLNA; inhibits cell migration and cell scattering by interfering with the interaction of FLNA with RALA. Isoform 1 interacts (via cytoplasmic domain) with PXN; the interaction is phosphotyrosyl-dependent. Isoform 1 interacts with KLRK1; recruits PTPN6 that dephosphorylates VAV1. Isoform 1 interacts with CEACAM8. Isoform 1 interacts with FASN; this interaction is insulin and phosphorylation-dependent; reduces fatty-acid synthase activity. Interacts (via Ig-like V-type) with HAVCR2 (via Ig-like V-type); facilitates the maturation and cell surface expression of HAVCR2 thereby regulating T-cell tolerance induction. Isoform 2 interacts (via the cytoplasmic domain) with ANXA2; this interaction is regulated by phosphorylation and appears in the AIIt complex. Interacts (via Lewis X moieties) with CD209 (via C-type lectin domain); this interaction is regulated by the glycosylation pattern of CEACAM1 on cell types and regulates contact between dendritic cells and neutrophils. Post-translationally, phosphorylated on serine and tyrosine. Isoform 1 is phosphorylated on tyrosine by Src family kinases like SRC and LCK and by receptor like CSF3R, EGFR and INSR upon stimulation. Phosphorylated at Ser-503; mediates activity. Phosphorylated at Tyr-488; regulates activity. Phosphorylated at Tyr-488 by EGFR and INSR upon stimulation; this phosphorylation is Ser-503-phosphorylation-dependent; mediates cellular internalization; increases interaction with FASN. Phosphorylated at Tyr-488 and Tyr-513 by LCK; mediates PTPN6 association and is regulated by homophilic ligation of CEACAM1 in the absence of T-cell activation. Phosphorylated at Tyr-513; mediates interaction with PTPN11. Phosphorylated on serine and threonine. As to expression, expressed in epithelia, vessel endothelia, leukocytes and platelets. Isoform 1 and isoform 2 are highly expressed in liver and intestine, moderately in lung, and weakly in muscle, kidney, and spleen. Expressed in granulocytes, lymphocytes, granulocytes, B cells, and T-cells.

The protein resides in the cell membrane. Its subcellular location is the lateral cell membrane. The protein localises to the apical cell membrane. It is found in the basal cell membrane. It localises to the cell junction. The protein resides in the adherens junction. Its subcellular location is the cytoplasmic vesicle. The protein localises to the secretory vesicle. It is found in the cell projection. It localises to the microvillus membrane. Functionally, cell adhesion protein that mediates homophilic cell adhesion in a calcium-independent manner. Plays a role as coinhibitory receptor in immune response, insulin action and also functions as an activator during angiogenesis. Its coinhibitory receptor function is phosphorylation- and PTPN6 -dependent, which in turn, suppress signal transduction of associated receptors by dephosphorylation of their downstream effectors. Plays a role in immune response, of T-cells, natural killer (NK) and neutrophils. Upon TCR/CD3 complex stimulation, inhibits TCR-mediated cytotoxicity by blocking granule exocytosis by mediating homophilic binding to adjacent cells, allowing interaction with and phosphorylation by LCK and interaction with the TCR/CD3 complex which recruits PTPN6 resulting in dephosphorylation of CD247 and ZAP70. Also inhibits T-cell proliferation and cytokine production through inhibition of JNK cascade and plays a crucial role in regulating autoimmunity and anti-tumor immunity by inhibiting T-cell through its interaction with HAVCR2. Upon natural killer (NK) cells activation, inhibit KLRK1-mediated cytolysis of CEACAM1-bearing tumor cells by trans-homophilic interactions with CEACAM1 on the target cell and lead to cis-interaction between CEACAM1 and KLRK1, allowing PTPN6 recruitment and then VAV1 dephosphorylation. Upon neutrophils activation negatively regulates IL1B production by recruiting PTPN6 to a SYK-TLR4-CEACAM1 complex, that dephosphorylates SYK, reducing the production of reactive oxygen species (ROS) and lysosome disruption, which in turn, reduces the activity of the inflammasome. Down-regulates neutrophil production by acting as a coinhibitory receptor for CSF3R by downregulating the CSF3R-STAT3 pathway through recruitment of PTPN6 that dephosphorylates CSF3R. Also regulates insulin action by promoting INS clearance and regulating lipogenesis in liver through regulating insulin signaling. Upon INS stimulation, undergoes phosphorylation by INSR leading to INS clearance by increasing receptor-mediated insulin endocytosis. This inernalization promotes interaction with FASN leading to receptor-mediated insulin degradation and to reduction of FASN activity leading to negative regulation of fatty acid synthesis. INSR-mediated phosphorylation also provokes a down-regulation of cell proliferation through SHC1 interaction resulting in decrease coupling of SHC1 to the MAPK3/ERK1-MAPK1/ERK2 and phosphatidylinositol 3-kinase pathways. Functions as activator in angiogenesis by promoting blood vessel remodeling through endothelial cell differentiation and migration and in arteriogenesis by increasing the number of collateral arteries and collateral vessel calibers after ischemia. Also regulates vascular permeability through the VEGFR2 signaling pathway resulting in control of nitric oxide production. Down-regulates cell growth in response to EGF through its interaction with SHC1 that mediates interaction with EGFR resulting in decrease coupling of SHC1 to the MAPK3/ERK1-MAPK1/ERK2 pathway. Negatively regulates platelet aggregation by decreasing platelet adhesion on type I collagen through the GPVI-FcRgamma complex. Inhibits cell migration and cell scattering through interaction with FLNA; interferes with the interaction of FLNA with RALA. Mediates bile acid transport activity in a phosphorylation dependent manner. Negatively regulates osteoclastogenesis. Cell adhesion proteins that mediates homophilic cell adhesion in a calcium-independent manner. Promotes populations of T-cells regulating IgA production and secretion associated with control of the commensal microbiota and resistance to enteropathogens. The polypeptide is Cell adhesion molecule CEACAM1 (Rattus norvegicus (Rat)).